Reading from the N-terminus, the 308-residue chain is Probable manganese-dependent inorganic pyrophosphatase (308 aa).

Mn(2+) contacts are provided by His9, Asp13, Asp15, Asp75, His97, and Asp149.

This sequence belongs to the PPase class C family. Mn(2+) serves as cofactor.

It localises to the cytoplasm. It carries out the reaction diphosphate + H2O = 2 phosphate + H(+). The chain is Probable manganese-dependent inorganic pyrophosphatase from Listeria monocytogenes serotype 4b (strain CLIP80459).